Here is a 398-residue protein sequence, read N- to C-terminus: S-adenosylmethionine synthase (398 aa).

Residue His-15 coordinates ATP. Residue Asp-17 participates in Mg(2+) binding. K(+) is bound at residue Glu-43. Residues Glu-56 and Gln-99 each contribute to the L-methionine site. The tract at residues 99 to 109 (QSPDIAQGVDT) is flexible loop. ATP-binding positions include 175 to 177 (DGK), 243 to 244 (RF), Asp-252, 258 to 259 (RK), Ala-275, and Lys-279. Asp-252 serves as a coordination point for L-methionine. Position 283 (Lys-283) interacts with L-methionine.

Belongs to the AdoMet synthase family. Homotetramer; dimer of dimers. Requires Mg(2+) as cofactor. K(+) serves as cofactor.

It is found in the cytoplasm. The enzyme catalyses L-methionine + ATP + H2O = S-adenosyl-L-methionine + phosphate + diphosphate. The protein operates within amino-acid biosynthesis; S-adenosyl-L-methionine biosynthesis; S-adenosyl-L-methionine from L-methionine: step 1/1. In terms of biological role, catalyzes the formation of S-adenosylmethionine (AdoMet) from methionine and ATP. The overall synthetic reaction is composed of two sequential steps, AdoMet formation and the subsequent tripolyphosphate hydrolysis which occurs prior to release of AdoMet from the enzyme. This is S-adenosylmethionine synthase from Parafrankia sp. (strain EAN1pec).